The following is a 448-amino-acid chain: Exodeoxyribonuclease 7 large subunit (448 aa).

It belongs to the XseA family. In terms of assembly, heterooligomer composed of large and small subunits.

It localises to the cytoplasm. The protein resides in the nucleoid. The catalysed reaction is Exonucleolytic cleavage in either 5'- to 3'- or 3'- to 5'-direction to yield nucleoside 5'-phosphates.. Functionally, bidirectionally degrades single-stranded DNA into large acid-insoluble oligonucleotides, which are then degraded further into small acid-soluble oligonucleotides. This is Exodeoxyribonuclease 7 large subunit from Bacillus subtilis (strain 168).